Consider the following 210-residue polypeptide: Peroxiredoxin-5, mitochondrial (210 aa).

The N-terminal 48 residues, methionine 1–threonine 48, are a transit peptide targeting the mitochondrion. The Thioredoxin domain maps to isoleucine 52–leucine 210. N6-acetyllysine; alternate is present on lysine 70. Lysine 70 is subject to N6-succinyllysine; alternate. Position 71 is an N6-acetyllysine (lysine 71). Lysine 79 is subject to N6-acetyllysine; alternate. The residue at position 79 (lysine 79) is an N6-succinyllysine; alternate. Catalysis depends on cysteine 96, which acts as the Cysteine sulfenic acid (-SOH) intermediate. Residue cysteine 96 is the site of S-palmitoyl cysteine attachment. A disulfide bridge links cysteine 96 with cysteine 200. Position 112 is an N6-succinyllysine (lysine 112). A phosphoserine mark is found at serine 167 and serine 178. The short motif at serine 208–leucine 210 is the Microbody targeting signal element.

Belongs to the peroxiredoxin family. Prx5 subfamily. As to quaternary structure, monomer. Post-translationally, S-palmitoylated. Palmitoylation occurs on the active site, inhibiting its reactivity; therefore PRDX5 palmitoylation status determines its antioxidant capacity. In terms of processing, S-palmitoylated. Depalmitoylated by ABHD10. As to expression, widely expressed.

It is found in the mitochondrion. Its subcellular location is the cytoplasm. The protein localises to the peroxisome matrix. It carries out the reaction a hydroperoxide + [thioredoxin]-dithiol = an alcohol + [thioredoxin]-disulfide + H2O. In terms of biological role, thiol-specific peroxidase that catalyzes the reduction of hydrogen peroxide and organic hydroperoxides to water and alcohols, respectively. Plays a role in cell protection against oxidative stress by detoxifying peroxides and as sensor of hydrogen peroxide-mediated signaling events. In Mus musculus (Mouse), this protein is Peroxiredoxin-5, mitochondrial.